The primary structure comprises 325 residues: 7,8-didemethyl-8-hydroxy-5-deazariboflavin synthase (325 aa).

The Radical SAM core domain occupies 1-241 (MTYSKNVFVP…SDIAVQVAPN (241 aa)). Cysteine 15, cysteine 19, and cysteine 22 together coordinate [4Fe-4S] cluster.

It belongs to the radical SAM superfamily. CofG family. In terms of assembly, consists of two subunits, CofG and CofH. It depends on [4Fe-4S] cluster as a cofactor.

It carries out the reaction 5-amino-5-(4-hydroxybenzyl)-6-(D-ribitylimino)-5,6-dihydrouracil + S-adenosyl-L-methionine = 7,8-didemethyl-8-hydroxy-5-deazariboflavin + 5'-deoxyadenosine + L-methionine + NH4(+) + H(+). The protein operates within cofactor biosynthesis; coenzyme F0 biosynthesis. Catalyzes the radical-mediated synthesis of 7,8-didemethyl-8-hydroxy-5-deazariboflavin from 5-amino-5-(4-hydroxybenzyl)-6-(D-ribitylimino)-5,6-dihydrouracil. This chain is 7,8-didemethyl-8-hydroxy-5-deazariboflavin synthase, found in Methanosarcina barkeri (strain Fusaro / DSM 804).